The chain runs to 106 residues: MILTTADTLGKREIIEYKGLVTGIIVRTPTITQGILGGLKNIIGGKNTSYTNVCKEARLHAEQEMINQAKELGANAIVAIRYDSSSLGGNTSGTEVFCYGTAVVVR.

It belongs to the UPF0145 family.

This is UPF0145 protein FTL_1249 from Francisella tularensis subsp. holarctica (strain LVS).